Here is a 165-residue protein sequence, read N- to C-terminus: Type 3 secretion system regulator YopR (165 aa).

Residues 2-11 (TVTLNRGSIT) form a 5' secretion signal region. The interval 131–149 (PYLSELINKELMILLPYNS) is 3' secretion signal.

This sequence belongs to the YopR family.

The protein resides in the secreted. Functionally, may be involved in the regulation of the assembly of the type III secretion system (T3SS), also called injectisome, which is used to inject bacterial effector proteins into eukaryotic host cells. May control the secretion and/or polymerization of YscF/SctF, the principal component of the needle filament, thereby impacting the assembly of the T3SS. Involved in pathogenesis. Essential for the establishment of Yersinia infections in a mouse model system. The polypeptide is Type 3 secretion system regulator YopR (Yersinia enterocolitica).